We begin with the raw amino-acid sequence, 329 residues long: Biotin synthase (329 aa).

Positions 48-278 (FLGTGVDLCS…DRKIAVCGGR (231 aa)) constitute a Radical SAM core domain. Positions 66, 70, and 73 each coordinate [4Fe-4S] cluster. The [2Fe-2S] cluster site is built by Ser143 and Cys203.

It belongs to the radical SAM superfamily. Biotin synthase family. In terms of assembly, homodimer. Requires [4Fe-4S] cluster as cofactor. The cofactor is [2Fe-2S] cluster.

It carries out the reaction (4R,5S)-dethiobiotin + (sulfur carrier)-SH + 2 reduced [2Fe-2S]-[ferredoxin] + 2 S-adenosyl-L-methionine = (sulfur carrier)-H + biotin + 2 5'-deoxyadenosine + 2 L-methionine + 2 oxidized [2Fe-2S]-[ferredoxin]. The protein operates within cofactor biosynthesis; biotin biosynthesis; biotin from 7,8-diaminononanoate: step 2/2. Functionally, catalyzes the conversion of dethiobiotin (DTB) to biotin by the insertion of a sulfur atom into dethiobiotin via a radical-based mechanism. The polypeptide is Biotin synthase (Geobacter sulfurreducens (strain ATCC 51573 / DSM 12127 / PCA)).